The primary structure comprises 368 residues: Quinolinate synthase (368 aa).

Positions 46 and 63 each coordinate iminosuccinate. Position 110 (Cys110) interacts with [4Fe-4S] cluster. Iminosuccinate-binding positions include 141 to 143 and Ser162; that span reads YVN. Cys230 is a [4Fe-4S] cluster binding site. Iminosuccinate-binding positions include 256 to 258 and Thr273; that span reads HPE. Cys320 serves as a coordination point for [4Fe-4S] cluster.

Belongs to the quinolinate synthase family. Type 3 subfamily. [4Fe-4S] cluster serves as cofactor.

It is found in the cytoplasm. The enzyme catalyses iminosuccinate + dihydroxyacetone phosphate = quinolinate + phosphate + 2 H2O + H(+). It participates in cofactor biosynthesis; NAD(+) biosynthesis; quinolinate from iminoaspartate: step 1/1. Its function is as follows. Catalyzes the condensation of iminoaspartate with dihydroxyacetone phosphate to form quinolinate. This chain is Quinolinate synthase, found in Bacillus cereus (strain B4264).